The primary structure comprises 264 residues: Ribosomal RNA small subunit methyltransferase A (264 aa).

Histidine 15, leucine 17, glycine 42, glutamate 63, aspartate 88, and asparagine 109 together coordinate S-adenosyl-L-methionine.

It belongs to the class I-like SAM-binding methyltransferase superfamily. rRNA adenine N(6)-methyltransferase family. RsmA subfamily.

The protein resides in the cytoplasm. The enzyme catalyses adenosine(1518)/adenosine(1519) in 16S rRNA + 4 S-adenosyl-L-methionine = N(6)-dimethyladenosine(1518)/N(6)-dimethyladenosine(1519) in 16S rRNA + 4 S-adenosyl-L-homocysteine + 4 H(+). Specifically dimethylates two adjacent adenosines (A1518 and A1519) in the loop of a conserved hairpin near the 3'-end of 16S rRNA in the 30S particle. May play a critical role in biogenesis of 30S subunits. The protein is Ribosomal RNA small subunit methyltransferase A of Nitrosococcus oceani (strain ATCC 19707 / BCRC 17464 / JCM 30415 / NCIMB 11848 / C-107).